The following is a 700-amino-acid chain: Methionine--tRNA ligase (700 aa).

A 'HIGH' region motif is present at residues 16-26 (PYANGAFHVGH). C148, C151, C161, and C164 together coordinate Zn(2+). Residues 337-341 (KMSKS) carry the 'KMSKS' region motif. Position 340 (K340) interacts with ATP. A tRNA-binding domain is found at 594-700 (DFAKIDLRIA…PGAEPGMRVG (107 aa)).

This sequence belongs to the class-I aminoacyl-tRNA synthetase family. MetG type 1 subfamily. As to quaternary structure, homodimer. It depends on Zn(2+) as a cofactor.

It localises to the cytoplasm. The enzyme catalyses tRNA(Met) + L-methionine + ATP = L-methionyl-tRNA(Met) + AMP + diphosphate. Is required not only for elongation of protein synthesis but also for the initiation of all mRNA translation through initiator tRNA(fMet) aminoacylation. This chain is Methionine--tRNA ligase, found in Janthinobacterium sp. (strain Marseille) (Minibacterium massiliensis).